The sequence spans 121 residues: MVHMHITAWALGLILFFVAYSLYSAGRKGKGVHMGLRLMYIIIIVTGFMLYMSIVKTATGSMHMWYGLKMLAGILVIGGMEMVLVKMSKNKPTGAVWGLFIVALVAVFYLGLKLPIGWKVF.

4 helical membrane-spanning segments follow: residues 6-26 (ITAW…YSAG), 38-58 (LMYI…VKTA), 65-85 (WYGL…MVLV), and 92-112 (PTGA…YLGL).

The protein belongs to the UPF0344 family.

Its subcellular location is the cell membrane. This chain is UPF0344 protein BC_1150, found in Bacillus cereus (strain ATCC 14579 / DSM 31 / CCUG 7414 / JCM 2152 / NBRC 15305 / NCIMB 9373 / NCTC 2599 / NRRL B-3711).